Consider the following 471-residue polypeptide: Putative multidrug resistance protein MdtD (471 aa).

The Periplasmic portion of the chain corresponds to 1–11; sequence MTDLPDSTRWQ. The chain crosses the membrane as a helical span at residues 12-32; sequence LWIVAFGFFMQSLDTTIVNTA. Over 33–48 the chain is Cytoplasmic; that stretch reads LPSMAQSLGESPLHMH. The chain crosses the membrane as a helical span at residues 49-69; the sequence is MVIVSYVLTVAVMLPASGWLA. At 70–76 the chain is on the periplasmic side; it reads DKVGVRN. A helical membrane pass occupies residues 77 to 97; that stretch reads IFFTAIVLFTLGSLFCALSGT. The Cytoplasmic segment spans residues 98–101; the sequence is LNEL. Residues 102-124 traverse the membrane as a helical segment; it reads LLARALQGVGGAMMVPVGRLTVM. Over 125-137 the chain is Periplasmic; sequence KIVPREQYMAAMT. The chain crosses the membrane as a helical span at residues 138–158; sequence FVTLPGQVGPLLGPALGGLLV. Topologically, residues 159–164 are cytoplasmic; sequence EYASWH. A helical membrane pass occupies residues 165-185; that stretch reads WIFLINIPVGIIGAIATLMLM. Over 186–196 the chain is Periplasmic; that stretch reads PNYTMQTRRFD. A helical membrane pass occupies residues 197–217; sequence LSGFLLLAVGMAVLTLALDGS. The Cytoplasmic segment spans residues 218 to 224; sequence KGTGLSP. The chain crosses the membrane as a helical span at residues 225 to 245; the sequence is LAIAGLVAVGVVALVLYLLHA. Residues 246–262 lie on the Periplasmic side of the membrane; the sequence is RNNNRALFSLKLFRTRT. A helical membrane pass occupies residues 263–283; that stretch reads FSLGLAGSFAGRIGSGMLPFM. Over 284–285 the chain is Cytoplasmic; sequence TP. A helical transmembrane segment spans residues 286–306; sequence VFLQIGLGFSPFHAGLMMIPM. Residues 307–341 lie on the Periplasmic side of the membrane; it reads VLGSMGMKRIVVQVVNRFGYRRVLVATTLGLSLVT. The chain crosses the membrane as a helical span at residues 342 to 362; the sequence is LLFMTTALLGWYYVLPFVLFL. Topologically, residues 363–395 are cytoplasmic; the sequence is QGMVNSTRFSSMNTLTLKDLPDNLASSGNSLLS. Residues 396–416 form a helical membrane-spanning segment; sequence MIMQLSMSIGVTIAGLLLGLF. Residues 417–430 are Periplasmic-facing; it reads GSQHVSVDSGTTQT. Residues 431–451 form a helical membrane-spanning segment; the sequence is VFMYTWLSMAFIIALPAFIFA. Over 452-471 the chain is Cytoplasmic; the sequence is RVPNDTHQNVAISRRKRSAQ.

Belongs to the major facilitator superfamily. TCR/Tet family.

Its subcellular location is the cell inner membrane. This chain is Putative multidrug resistance protein MdtD, found in Escherichia coli (strain SMS-3-5 / SECEC).